The sequence spans 508 residues: Methionine--tRNA ligase (508 aa).

Positions 12–22 (YYVNDIPHIGH) match the 'HIGH' region motif. Residues 295–299 (KISKS) carry the 'KMSKS' region motif. Lys-298 lines the ATP pocket.

This sequence belongs to the class-I aminoacyl-tRNA synthetase family. MetG type 2B subfamily. Monomer.

Its subcellular location is the cytoplasm. The enzyme catalyses tRNA(Met) + L-methionine + ATP = L-methionyl-tRNA(Met) + AMP + diphosphate. Functionally, is required not only for elongation of protein synthesis but also for the initiation of all mRNA translation through initiator tRNA(fMet) aminoacylation. The sequence is that of Methionine--tRNA ligase from Rickettsia conorii (strain ATCC VR-613 / Malish 7).